Consider the following 284-residue polypeptide: Avenin-like b3 (284 aa).

The signal sequence occupies residues 1–18 (MKVFILALLALTATTAIA).

This sequence belongs to the prolamin family. Contains disulfide bonds.

In terms of biological role, seed storage protein. Might be integrated via inter-chain disulfide bonds within the glutenin polymer. This is Avenin-like b3 from Triticum aestivum (Wheat).